A 349-amino-acid polypeptide reads, in one-letter code: Phenylalanine--tRNA ligase alpha subunit (349 aa).

E258 contributes to the Mg(2+) binding site.

This sequence belongs to the class-II aminoacyl-tRNA synthetase family. Phe-tRNA synthetase alpha subunit type 1 subfamily. In terms of assembly, tetramer of two alpha and two beta subunits. The cofactor is Mg(2+).

The protein localises to the cytoplasm. The catalysed reaction is tRNA(Phe) + L-phenylalanine + ATP = L-phenylalanyl-tRNA(Phe) + AMP + diphosphate + H(+). The sequence is that of Phenylalanine--tRNA ligase alpha subunit from Rickettsia felis (strain ATCC VR-1525 / URRWXCal2) (Rickettsia azadi).